A 462-amino-acid polypeptide reads, in one-letter code: Syringate O-demethylase (462 aa).

It belongs to the GcvT family.

It carries out the reaction syringate + (6S)-5,6,7,8-tetrahydrofolate = 3-O-methylgallate + (6S)-5-methyl-5,6,7,8-tetrahydrofolate. It functions in the pathway secondary metabolite metabolism; lignin degradation. Functionally, involved in the catabolism of syringate. Catalyzes the conversion of syringate to 3-O-methylgallate (3MGA) in the presence of tetrahydrofolate. Has weak activity with vanillate and 3-O-methylgallate. The sequence is that of Syringate O-demethylase from Sphingobium sp. (strain NBRC 103272 / SYK-6).